The following is a 177-amino-acid chain: Probable adenylyl-sulfate kinase (177 aa).

12-19 lines the ATP pocket; it reads GLSGAGKT. Residue S86 is the Phosphoserine intermediate of the active site.

The protein belongs to the APS kinase family.

It carries out the reaction adenosine 5'-phosphosulfate + ATP = 3'-phosphoadenylyl sulfate + ADP + H(+). Its pathway is sulfur metabolism; hydrogen sulfide biosynthesis; sulfite from sulfate: step 2/3. In terms of biological role, catalyzes the synthesis of activated sulfate. The chain is Probable adenylyl-sulfate kinase (cysC) from Synechocystis sp. (strain ATCC 27184 / PCC 6803 / Kazusa).